A 195-amino-acid chain; its full sequence is ATP-dependent Clp protease proteolytic subunit 2 (195 aa).

Residue Ser98 is the Nucleophile of the active site. Residue His123 is part of the active site.

Belongs to the peptidase S14 family. Fourteen ClpP subunits assemble into 2 heptameric rings which stack back to back to give a disk-like structure with a central cavity, resembling the structure of eukaryotic proteasomes.

The protein localises to the cytoplasm. It carries out the reaction Hydrolysis of proteins to small peptides in the presence of ATP and magnesium. alpha-casein is the usual test substrate. In the absence of ATP, only oligopeptides shorter than five residues are hydrolyzed (such as succinyl-Leu-Tyr-|-NHMec, and Leu-Tyr-Leu-|-Tyr-Trp, in which cleavage of the -Tyr-|-Leu- and -Tyr-|-Trp bonds also occurs).. Its function is as follows. Cleaves peptides in various proteins in a process that requires ATP hydrolysis. Has a chymotrypsin-like activity. Plays a major role in the degradation of misfolded proteins. ClpXP2 is involved in the complete degradation of the Site-2 clipped anti-sigma-W factor RsiW. This results in the release of SigW and the transcription activation of the genes under the control of the sigma-W factor. This Shouchella clausii (strain KSM-K16) (Alkalihalobacillus clausii) protein is ATP-dependent Clp protease proteolytic subunit 2.